Reading from the N-terminus, the 889-residue chain is MADITVAELAKEIGTPVDRLVTQLADSGVNKSATDAISQDEKEALLGHLKKQHGDESEAKPNKLTLNRKTKSTLTMGHGSKAKSVNVEVRKKRTYVKRSEVEDEKLAEEAAKAEAEAAILAEADAKAKAEAAAKEAENEKGVAAAKAEVEAERKAEAKIEAAAKAKIAAVEKAKNVEQAPEKVAETEEAKKLRLAQEKETLAKVEAEAAAAAEAAKKLAEENEGRWKEQEAERKAKEKEVVHLTSSVYAQEAEDKSDSADESGRRRKKKKAPDRNARGRNSGRGKGKTLSSPQSLKHGFTKPVETKLQDIRIGETISVAELANKMSKKGAEVVKAMFKLGAMATINQVIDQETAALVAEDMGFEVVLVKENALEEAVLADRNDTGEEITRAPVVTIMGHVDHGKTSLLDHIREAKVADGEAGGITQHIGAYHVETGHGMITFLDTPGHAAFTAMRSRGAKATDIVVIVVAADDGVMPQTIEAIQHAQASEAPIIIAVNKMDKESADPDRVKSELSQHGVLSEEWGGEVQFCHVSAKTGLGIDELLDSILLQSEVLELTAVVDKMANGVVVESKLDKGRGPVATVLVQEGTLKQGDIVLCGLEYGRVRAMRDENGKTIQSAGPSIPVEIIGLSGVPISGDEATVVKDEKKAREVALFRQGKFRDVKLARQQKAKLENMFASMAEGDISEVNVVIKSDVQGSLEAISDSLLKLSTDEVKVKIIGSGVGAITETDATLAAASNAIVVGFNVRADASARKVIESENIDLRYYSVIYALIEEVKQAMSGMLAPEFKQEIIGLAQVRDVFKSPKIGAIAGCMVTEGVIKRSAPIRVLRENVVIYEGELESLRRFKDDVQEVRNGTECGIGVKNYNDVRVGDQIEVFETIEIKRSL.

Disordered stretches follow at residues 47-85 (GHLK…AKSV) and 206-302 (AEAA…FTKP). 3 stretches are compositionally biased toward basic and acidic residues: residues 52–61 (QHGDESEAKP), 214–241 (AAKK…KEVV), and 252–263 (AEDKSDSADESG). One can recognise a tr-type G domain in the interval 389-558 (TRAPVVTIMG…LLQSEVLELT (170 aa)). A G1 region spans residues 398–405 (GHVDHGKT). 398–405 (GHVDHGKT) is a binding site for GTP. Residues 423-427 (GITQH) are G2. Residues 444 to 447 (DTPG) form a G3 region. Residues 444–448 (DTPGH) and 498–501 (NKMD) each bind GTP. The segment at 498-501 (NKMD) is G4. Residues 534–536 (SAK) form a G5 region.

This sequence belongs to the TRAFAC class translation factor GTPase superfamily. Classic translation factor GTPase family. IF-2 subfamily.

The protein localises to the cytoplasm. In terms of biological role, one of the essential components for the initiation of protein synthesis. Protects formylmethionyl-tRNA from spontaneous hydrolysis and promotes its binding to the 30S ribosomal subunits. Also involved in the hydrolysis of GTP during the formation of the 70S ribosomal complex. This is Translation initiation factor IF-2 from Colwellia psychrerythraea (strain 34H / ATCC BAA-681) (Vibrio psychroerythus).